Reading from the N-terminus, the 308-residue chain is Acetylglutamate kinase (308 aa).

Residues 86–87, R108, and N201 each bind substrate; that span reads GG.

This sequence belongs to the acetylglutamate kinase family. ArgB subfamily.

Its subcellular location is the cytoplasm. The enzyme catalyses N-acetyl-L-glutamate + ATP = N-acetyl-L-glutamyl 5-phosphate + ADP. The protein operates within amino-acid biosynthesis; L-arginine biosynthesis; N(2)-acetyl-L-ornithine from L-glutamate: step 2/4. Functionally, catalyzes the ATP-dependent phosphorylation of N-acetyl-L-glutamate. This chain is Acetylglutamate kinase, found in Prochlorococcus marinus (strain MIT 9303).